We begin with the raw amino-acid sequence, 401 residues long: NADH-dependent flavin oxidoreductase iliE (401 aa).

Residues 25–28 (ASMS) and Gln107 each bind FMN. Position 188–191 (188–191 (HAAH)) interacts with substrate. 346–347 (AR) provides a ligand contact to FMN.

Belongs to the NADH:flavin oxidoreductase/NADH oxidase family.

Its function is as follows. NADH-dependent flavin oxidoreductase; part of the gene cluster that mediates the biosynthesis of ilicicolin H, a 4-hydroxy-2-pyridonealkaloid that has potent and broad antifungal activities by inhibiting the mitochondrial respiration chain. The biosynthesis of ilicicolin H starts with formation of the tetramic acid by the hybrid PKS-NRPS synthetase iliA with the partnering trans-enoyl reductase iliB since iliA lacks a designated enoylreductase (ER) domain. The cytochrome P450 monooxygenase iliC then catalyzes the ring expansion of the tetramate to the acyclic 2-pyridone. The pericyclase iliD further converts the acyclic 2-pyridone into 8-epi-ilicicolin H. 8-epi-ilicicolin H might then spontaneously convert to ilicicolin H since ilicicolin H is produced in the absence of the epimerase iliE, in contrast to what was observed for the Talaromyces variabilis ilicolin H biosynthetic pathway. The chain is NADH-dependent flavin oxidoreductase iliE from Hypocrea jecorina (strain QM6a) (Trichoderma reesei).